A 114-amino-acid polypeptide reads, in one-letter code: uncharacterized protein (114 aa).

3 helical membrane passes run 38–60 (PLWFLTVTGILEIAGALAMTAGI), 64–86 (YAAIGAGVLFVVLMAGAIHAHMF), and 91–113 (SVIMAIQAMICLIVSIMIIMGSY).

The protein resides in the cell membrane. This is an uncharacterized protein from Bacillus subtilis (strain 168).